A 560-amino-acid polypeptide reads, in one-letter code: Nitrite reductase (560 aa).

The first 26 residues, Met-1–Ala-26, serve as a signal peptide directing secretion. The tract at residues Ala-27–Pro-29 is N-terminal tail. Residues Glu-30–Ile-126 form the Cytochrome c domain. 3 residues coordinate heme c: Cys-47, Cys-50, and His-51. The disordered stretch occupies residues Lys-61–Gly-80. Positions Leu-63–Glu-78 are enriched in basic and acidic residues. Heme c-binding residues include Thr-97 and Met-101. Residues Pro-127 to Tyr-560 form a D1-heme domain region. Heme d1 contacts are provided by His-193, Arg-236, Ser-237, Tyr-256, Arg-382, and Gln-500.

In terms of assembly, homodimer in solution. The cofactor is heme c. Heme serves as cofactor.

Its subcellular location is the periplasm. It catalyses the reaction nitric oxide + Fe(III)-[cytochrome c] + H2O = Fe(II)-[cytochrome c] + nitrite + 2 H(+). It carries out the reaction A + NH4(+) + H2O = hydroxylamine + AH2 + H(+). This chain is Nitrite reductase (nirS), found in Stutzerimonas stutzeri (Pseudomonas stutzeri).